The primary structure comprises 307 residues: Ribonuclease Z (307 aa).

7 residues coordinate Zn(2+): His63, His65, Asp67, His68, His141, Asp212, and His270. Asp67 serves as the catalytic Proton acceptor.

This sequence belongs to the RNase Z family. As to quaternary structure, homodimer. Zn(2+) serves as cofactor.

It carries out the reaction Endonucleolytic cleavage of RNA, removing extra 3' nucleotides from tRNA precursor, generating 3' termini of tRNAs. A 3'-hydroxy group is left at the tRNA terminus and a 5'-phosphoryl group is left at the trailer molecule.. Functionally, zinc phosphodiesterase, which displays some tRNA 3'-processing endonuclease activity. Probably involved in tRNA maturation, by removing a 3'-trailer from precursor tRNA. The chain is Ribonuclease Z from Bacillus thuringiensis subsp. konkukian (strain 97-27).